Here is a 436-residue protein sequence, read N- to C-terminus: MRVVSSLFLPVLLAEVWLVSSFNLSSHSPEAPIRLVSQDYENQTWEEYEWADPRDDNEYWLRASQQLSNETSSFGFSLLRKISMRHDGNVIFSPFGLSVAMVNLMLGAKGETKVQVENGLNLQALSQAGPLILPALFKRVKETFSSNKKLGLTQGSFAFIHKDFEIKKTYFNLSTMYFDTEYVPTNFRNSSQARGLMNHYINKETEGKIPKLFDEINPETKLILVDYILFKGKWLTPFDPIFTEADTFHLDKYKAVKVPMMYREGNFASTFDKKFRCHILKLPYQGNATMLVVLMEKSGDHLALEDYLTTDLVEMWLQDMKTRKMEVFFPKFKLNQRYEMHELLKQVGIRRIFSTSADLSELSAVARNLQVSKVVQQSVLEVDERGTEVVSGTVSEITAYCMPPVIKVDRPFHFIIYEEMSQMLLFLGRVVNPTVL.

A signal peptide spans 1 to 20 (MRVVSSLFLPVLLAEVWLVS). 3 N-linked (GlcNAc...) asparagine glycosylation sites follow: Asn23, Asn42, and Asn69. Residues 128-145 (AGPLILPALFKRVKETFS) form a heparin-binding region. Asn172, Asn189, and Asn287 each carry an N-linked (GlcNAc...) asparagine glycan.

This sequence belongs to the serpin family. In terms of processing, phosphorylated by FAM20C in the extracellular medium. In terms of tissue distribution, expressed by the liver and secreted in plasma.

It localises to the secreted. Functionally, inhibits activity of the coagulation protease factor Xa in the presence of PROZ, calcium and phospholipids. Also inhibits factor XIa in the absence of cofactors. This Rattus norvegicus (Rat) protein is Protein Z-dependent protease inhibitor (Serpina10).